Reading from the N-terminus, the 62-residue chain is Calmodulin regulator protein PCP4 (62 aa).

Residues 1 to 39 are disordered; that stretch reads MSERQGAGATNGKDKTSGENDGQKKVQEEFDIDMDAPET. Basic and acidic residues predominate over residues 12–28; it reads GKDKTSGENDGQKKVQE. Residues 28-40 form an acidic; binds calcium and is required for modulating the calcium-binding kinetics of calmodulin region; sequence EEFDIDMDAPETE. An IQ domain is found at 39–62; that stretch reads TERAAVAIQSQFRKFQKKKAGSQS.

This sequence belongs to the PCP4 family. In terms of assembly, binds to both calcium-free and calcium-bound calmodulin. The affinity for the calcium-bound form is 50-fold greater.

Its function is as follows. Functions as a modulator of calcium-binding by calmodulin. Thereby, regulates calmodulin activity and the different processes it controls. For instance, may play a role in neuronal differentiation through activation of calmodulin-dependent kinase signaling pathways. The protein is Calmodulin regulator protein PCP4 of Homo sapiens (Human).